A 184-amino-acid chain; its full sequence is Peptidyl-tRNA hydrolase (184 aa).

A tRNA-binding site is contributed by Y14. H19 (proton acceptor) is an active-site residue. Residues F60 and N62 each coordinate tRNA.

It belongs to the PTH family. Monomer.

The protein localises to the cytoplasm. It carries out the reaction an N-acyl-L-alpha-aminoacyl-tRNA + H2O = an N-acyl-L-amino acid + a tRNA + H(+). Its function is as follows. Hydrolyzes ribosome-free peptidyl-tRNAs (with 1 or more amino acids incorporated), which drop off the ribosome during protein synthesis, or as a result of ribosome stalling. Functionally, catalyzes the release of premature peptidyl moieties from peptidyl-tRNA molecules trapped in stalled 50S ribosomal subunits, and thus maintains levels of free tRNAs and 50S ribosomes. The protein is Peptidyl-tRNA hydrolase of Mesomycoplasma hyopneumoniae (strain 7448) (Mycoplasma hyopneumoniae).